Reading from the N-terminus, the 365-residue chain is Aminotransferase poxL (365 aa).

Arg-92 lines the pyridoxal 5'-phosphate pocket. Position 193 is an N6-(pyridoxal phosphate)lysine (Lys-193). Glu-229 contributes to the pyridoxal 5'-phosphate binding site.

It belongs to the class-IV pyridoxal-phosphate-dependent aminotransferase family. Requires pyridoxal 5'-phosphate as cofactor.

It participates in secondary metabolite biosynthesis. Its function is as follows. Aminotransferase; part of the gene cluster that mediates the biosynthesis of oxaleimides, cytotoxic compounds containing an unusual disubstituted succinimide moiety. The first step of the pathway is provided by the HR-PKS poxF that serves in a new mode of collaborative biosynthesis with the PKS-NRPS poxE, by providing the olefin containing amino acid substrate via the synthesis of an ACP-bound dec-4-enoate. The cytochrome P450 monooxygenase poxM-catalyzed oxidation at the alpha-position creates the enzyme-bound 2-hydroxydec-4-enoyl-ACP thioester, which may be prone to spontaneous hydrolysis to yield 2-hydroxydec-4-enoic acid due to increased electrophilicity of the carbonyl. 2-hydroxydec-4-enoic acid can then be further oxidized by poxM to yield the alpha-ketoacid 2-oxodec-4-enoicacid, which is reductively aminated by the aminotransferase poxL to yield (S,E)-2-aminodec-4-enoic acid. The Hybrid PKS-NRPS synthetase poxE then performs condensation between the octaketide product of its PKS modules and the amino group of (S,E)-2-aminodec-4-enoic acid which is activated and incorporated by the adenylation domain. The resulting aminoacyl product can be cyclized by the Diels-Alderase PoxQ and reductively released by the reductive (R) domain of poxE to yield an aldehyde intermediate. The released aldehyde is then substrate for a Knoevenagel condensation by the hydrolyase poxO followed by an oxidation at the 5-position of the pyrrolidone ring. The presence of the olefin from the amino acid building block allows for migration of the substituted allyl group to occur. This allylic transposition reaction takes place in a conjugate addition, semipinacol-like fashion to yield a succinimide intermediate. Iterative two-electron oxidations of the C7 methyl of the succinimide intermediate to the carboxylic acid can be catalyzed by one of two remaining cytochrome P450 monooxygenasess poxC or poxD to yield oxaleimide A. Subsequent oxidation yields the maleimide scaffold oxaleimide I. Both oxaleimide A and oxaleimide I can undergo oxidative modifications in the decalin ring to yield the series of products oxaleimides B to H. The chain is Aminotransferase poxL from Penicillium oxalicum (strain 114-2 / CGMCC 5302) (Penicillium decumbens).